We begin with the raw amino-acid sequence, 343 residues long: 4-hydroxy-2-oxovalerate aldolase (343 aa).

Positions 4–254 (PRLTDTTLRD…NPGLDVFSLM (251 aa)) constitute a Pyruvate carboxyltransferase domain. Substrate is bound at residue 12-13 (RD). D13 lines the Mn(2+) pocket. H16 acts as the Proton acceptor in catalysis. 2 residues coordinate substrate: S166 and H193. Positions 193 and 195 each coordinate Mn(2+). Residue Y284 coordinates substrate.

The protein belongs to the 4-hydroxy-2-oxovalerate aldolase family.

The enzyme catalyses (S)-4-hydroxy-2-oxopentanoate = acetaldehyde + pyruvate. The protein is 4-hydroxy-2-oxovalerate aldolase of Chloroflexus aurantiacus (strain ATCC 29364 / DSM 637 / Y-400-fl).